The sequence spans 947 residues: Zinc finger protein 268 (947 aa).

Residues leucine 81–proline 152 form the KRAB domain. Serine 178 carries the phosphoserine; by TBK1 modification. C2H2-type zinc fingers lie at residues phenylalanine 276–histidine 298, tyrosine 304–histidine 326, histidine 332–histidine 354, tyrosine 360–histidine 382, tyrosine 388–histidine 410, tyrosine 416–histidine 438, tyrosine 444–histidine 466, tyrosine 472–histidine 494, tyrosine 500–histidine 522, histidine 528–histidine 550, tyrosine 556–histidine 578, tyrosine 584–histidine 606, phenylalanine 612–histidine 634, tyrosine 640–histidine 662, tyrosine 668–histidine 690, tyrosine 696–histidine 718, histidine 724–histidine 746, tyrosine 752–histidine 774, tyrosine 780–histidine 802, tyrosine 808–histidine 830, tyrosine 836–histidine 858, tyrosine 864–histidine 886, tyrosine 892–histidine 914, and cysteine 920–histidine 942.

Belongs to the krueppel C2H2-type zinc-finger protein family. As to quaternary structure, interacts (via the KRAB domain) with TRIM28 (via the RBCC domain); the interaction increases ZNF268 nuclear localization activity. Isoform 2 interacts with CHUK and IKBKB; the interaction is further increased in a TNF-alpha-dependent manner. Interacts with TOLLIP; this interaction is impaired by ZNF268 phosphorylation at Ser-178. Forms a ternary complex with TBK1 and SETD4; the interaction between SETD4 and TBK1 is ZNF268-dependent and leads to TBK1 monomethylation. Post-translationally, phosphorylation at Ser-178 stabilizes the protein by interfering with its binding to TOLLIP, hence impairing its degradation by Tollip-mediated selective autophagy system. Overexpressed in ovarian cancer tissues compared to normal ovarian tissues. Isoform 1 and isoform 2 are expressed in squamous epithelium tissues. Isoform 2 is overexpressed in squamous cervical cancer (at protein level). Expressed in blood cells. Isoform 1 is expressed in pancreas, lung, skeletal muscle, heart, placenta, liver, kidney and brain. Isoform 2 expressed in chronic lymphocytic leukemia (CLL) and several tumor cell lines. Isoform 3 is expressed in several tumor cells. Isoform 5 is expressed in fetal liver and several tumor cells. Isoform 6 is weakly expressed in brain, lung amd small intestin and in several tumor cells. Isoform 7 is expressed in fetal liver and several tumor cells.

Its subcellular location is the nucleus. It is found in the cytoplasm. In terms of biological role, acts as a transcriptional repressor. Inhibits erythroid differentiation and tumor cell proliferation. Plays a role during ovarian cancer development and progression. Functionally, contributes to cervical carcinogenesis in part through the TNF-alpha-induced NF-kappa-B signaling pathway by interacting with the I-kappa-B-kinase (IKK) core complex. Involved in the regulation of antiviral interferon signaling. During viral infection, recruits SETD4 to TBK1, leading to TBK1 monomethylation, which is critical for the assembly of TBK1 complex and IRF3 signaling. The protein is Zinc finger protein 268 (ZNF268) of Homo sapiens (Human).